A 233-amino-acid chain; its full sequence is MRFFRFLVFPVIAGLSSVLAAPITSNDTVDGSGEAPETLLQNSEEQPHQRLKFYNWDYKDLGTTAFEDISFPARQPPVAVNQSEQCPDGWLRFADSCYWIETELMGFAKAERKCFEKQSTLFVANSLEEWDSIRSHSKEAYFSWIGLVRFTHYEKSEQLPRWQTEGAINPTKMNWLIKPYKPIVNGWTSFANCAASYKSPATLESASYTFFYPCTYLLYSICERNSTIVNVMQ.

The signal sequence occupies residues 1-20; it reads MRFFRFLVFPVIAGLSSVLA. A glycan (N-linked (GlcNAc...) asparagine) is linked at N26. S32 carries O-linked (Xyl...) (chondroitin sulfate) serine glycosylation. An N-linked (GlcNAc...) asparagine glycan is attached at N81. The C-type lectin domain occupies 93-223; the sequence is FADSCYWIET…CTYLLYSICE (131 aa). Cystine bridges form between C114/C222 and C193/C214. The N-linked (GlcNAc...) asparagine glycan is linked to N225.

This chain is C-type lectin domain-containing protein 87, found in Caenorhabditis briggsae.